The chain runs to 249 residues: DNA polymerase sliding clamp (249 aa).

This sequence belongs to the PCNA family. In terms of assembly, homotrimer. The subunits circularize to form a toroid; DNA passes through its center. Replication factor C (RFC) is required to load the toroid on the DNA.

In terms of biological role, sliding clamp subunit that acts as a moving platform for DNA processing. Responsible for tethering the catalytic subunit of DNA polymerase and other proteins to DNA during high-speed replication. This chain is DNA polymerase sliding clamp, found in Pyrococcus horikoshii (strain ATCC 700860 / DSM 12428 / JCM 9974 / NBRC 100139 / OT-3).